Consider the following 338-residue polypeptide: DNA-directed RNA polymerase subunit alpha (338 aa).

The alpha N-terminal domain (alpha-NTD) stretch occupies residues Met1–Glu234. The interval Phe250–Tyr338 is alpha C-terminal domain (alpha-CTD).

Belongs to the RNA polymerase alpha chain family. In terms of assembly, homodimer. The RNAP catalytic core consists of 2 alpha, 1 beta, 1 beta' and 1 omega subunit. When a sigma factor is associated with the core the holoenzyme is formed, which can initiate transcription.

It catalyses the reaction RNA(n) + a ribonucleoside 5'-triphosphate = RNA(n+1) + diphosphate. Its function is as follows. DNA-dependent RNA polymerase catalyzes the transcription of DNA into RNA using the four ribonucleoside triphosphates as substrates. This chain is DNA-directed RNA polymerase subunit alpha, found in Xanthobacter autotrophicus (strain ATCC BAA-1158 / Py2).